A 185-amino-acid polypeptide reads, in one-letter code: Crossover junction endodeoxyribonuclease RuvC (185 aa).

Active-site residues include aspartate 7, glutamate 66, and aspartate 137. Mg(2+) contacts are provided by aspartate 7, glutamate 66, and aspartate 137.

The protein belongs to the RuvC family. Homodimer which binds Holliday junction (HJ) DNA. The HJ becomes 2-fold symmetrical on binding to RuvC with unstacked arms; it has a different conformation from HJ DNA in complex with RuvA. In the full resolvosome a probable DNA-RuvA(4)-RuvB(12)-RuvC(2) complex forms which resolves the HJ. It depends on Mg(2+) as a cofactor.

It localises to the cytoplasm. It carries out the reaction Endonucleolytic cleavage at a junction such as a reciprocal single-stranded crossover between two homologous DNA duplexes (Holliday junction).. In terms of biological role, the RuvA-RuvB-RuvC complex processes Holliday junction (HJ) DNA during genetic recombination and DNA repair. Endonuclease that resolves HJ intermediates. Cleaves cruciform DNA by making single-stranded nicks across the HJ at symmetrical positions within the homologous arms, yielding a 5'-phosphate and a 3'-hydroxyl group; requires a central core of homology in the junction. The consensus cleavage sequence is 5'-(A/T)TT(C/G)-3'. Cleavage occurs on the 3'-side of the TT dinucleotide at the point of strand exchange. HJ branch migration catalyzed by RuvA-RuvB allows RuvC to scan DNA until it finds its consensus sequence, where it cleaves and resolves the cruciform DNA. The chain is Crossover junction endodeoxyribonuclease RuvC from Anaeromyxobacter sp. (strain K).